A 281-amino-acid chain; its full sequence is Aldo-keto reductase MMAR_1744 (281 aa).

Tyr-56 serves as the catalytic Proton donor. Leu-196, Ile-234, Ser-237, Thr-245, Asn-246, and Arg-272 together coordinate NADPH.

The protein belongs to the aldo/keto reductase family.

This Mycobacterium marinum (strain ATCC BAA-535 / M) protein is Aldo-keto reductase MMAR_1744.